Here is a 198-residue protein sequence, read N- to C-terminus: Recombination protein RecR (198 aa).

Residues Cys57–Cys72 form a C4-type zinc finger. The 96-residue stretch at Ser80–Ala175 folds into the Toprim domain.

Belongs to the RecR family.

May play a role in DNA repair. It seems to be involved in an RecBC-independent recombinational process of DNA repair. It may act with RecF and RecO. The chain is Recombination protein RecR from Streptococcus sanguinis (strain SK36).